Reading from the N-terminus, the 223-residue chain is Peptidyl-prolyl cis-trans isomerase, mitochondrial (223 aa).

The transit peptide at 1-44 directs the protein to the mitochondrion; that stretch reads MFGPRHFSVLKTTGSLVSSTFSSSLKPTATFSCARAFSQTSSIM. The 161-residue stretch at 62 to 222 folds into the PPIase cyclophilin-type domain; that stretch reads NKPTSEIKAQ…KKPTIVDCGA (161 aa).

The protein belongs to the cyclophilin-type PPIase family.

Its subcellular location is the mitochondrion. It is found in the cytoplasm. It carries out the reaction [protein]-peptidylproline (omega=180) = [protein]-peptidylproline (omega=0). With respect to regulation, binds cyclosporin A (CsA). CsA mediates some of its effects via an inhibitory action on PPIase. In terms of biological role, PPIases accelerate the folding of proteins. It catalyzes the cis-trans isomerization of proline imidic peptide bonds in oligopeptides. This Neurospora crassa (strain ATCC 24698 / 74-OR23-1A / CBS 708.71 / DSM 1257 / FGSC 987) protein is Peptidyl-prolyl cis-trans isomerase, mitochondrial (csr-1).